Here is a 465-residue protein sequence, read N- to C-terminus: MGAMMVMMGLLLIIVSLCSALLRWNQMRYTKNGLPPGTMGWPIFGETTEFLKQGPNFMRNQRLRYGSFFKSHLLGCPTLISMDSEVNRYILKNESKGLVPGYPQSMLDILGTCNMAAVHGSSHRLMRGSLLSLISSTMMRDHILPKVDHFMRSYLDQWNELEVIDIQDKTKHMAFLSSLTQIAGNLRKPFVEEFKTAFFKLVVGTLSVPIDLPGTNYRCGIQARNNIDRLLRELMQERRDSGETFTDMLGYLMKKEGNRYPLTDEEIRDQVVTILYSGYETVSTTSMMALKYLHDHPKALQELRAEHLAFRERKRQDEPLGLEDVKSMKFTRAVIYETSRLATIVNGVLRKTTRDLEINGYLIPKGWRIYVYTREINYDANLYEDPLIFNPWRWMKKSLESQNSCFVFGGGTRLCPGKELGIVEISSFLHYFVTRYRWEEIGGDELMVFPRVFAPKGFHLRISPY.

The chain crosses the membrane as a helical span at residues 2–22; sequence GAMMVMMGLLLIIVSLCSALL. Residue C415 participates in heme binding.

This sequence belongs to the cytochrome P450 family. Heme serves as cofactor. In terms of tissue distribution, mainly expressed in apical shoots, hypocotyls, siliques and roots. Also present in the female gametophyte.

The protein localises to the membrane. The catalysed reaction is 6-deoxoteasterone + reduced [NADPH--hemoprotein reductase] + O2 = 6alpha-hydroxyteasterone + oxidized [NADPH--hemoprotein reductase] + H2O + H(+). The enzyme catalyses 6alpha-hydroxytyphasterol + reduced [NADPH--hemoprotein reductase] + O2 = teasterone + oxidized [NADPH--hemoprotein reductase] + 2 H2O + H(+). It catalyses the reaction 3-dehydro-6-deoxoteasterone + reduced [NADPH--hemoprotein reductase] + O2 = 3-dehydro-6alpha-hydroxyteasterone + oxidized [NADPH--hemoprotein reductase] + H2O + H(+). It carries out the reaction 3-dehydro-6alpha-hydroxyteasterone + reduced [NADPH--hemoprotein reductase] + O2 = 3-dehydroteasterone + oxidized [NADPH--hemoprotein reductase] + 2 H2O + H(+). The catalysed reaction is 6-deoxotyphasterol + reduced [NADPH--hemoprotein reductase] + O2 = 6alpha-hydroxytyphasterol + oxidized [NADPH--hemoprotein reductase] + H2O + H(+). The enzyme catalyses 6alpha-hydroxytyphasterol + reduced [NADPH--hemoprotein reductase] + O2 = typhasterol + oxidized [NADPH--hemoprotein reductase] + 2 H2O + H(+). It catalyses the reaction 6-deoxocastasterone + reduced [NADPH--hemoprotein reductase] + O2 = 6alpha-hydroxycastasterone + oxidized [NADPH--hemoprotein reductase] + H2O + H(+). It carries out the reaction 6alpha-hydroxycastasterone + reduced [NADPH--hemoprotein reductase] + O2 = castasterone + oxidized [NADPH--hemoprotein reductase] + 2 H2O + H(+). The catalysed reaction is 6-deoxocastasterone + 2 reduced [NADPH--hemoprotein reductase] + 2 O2 = castasterone + 2 oxidized [NADPH--hemoprotein reductase] + 3 H2O + 2 H(+). The enzyme catalyses 6-deoxoteasterone + 2 reduced [NADPH--hemoprotein reductase] + 2 O2 = teasterone + 2 oxidized [NADPH--hemoprotein reductase] + 3 H2O + 2 H(+). It catalyses the reaction 6-deoxotyphasterol + 2 reduced [NADPH--hemoprotein reductase] + 2 O2 = typhasterol + 2 oxidized [NADPH--hemoprotein reductase] + 3 H2O + 2 H(+). It carries out the reaction 3-dehydro-6-deoxoteasterone + 2 reduced [NADPH--hemoprotein reductase] + 2 O2 = 3-dehydroteasterone + 2 oxidized [NADPH--hemoprotein reductase] + 3 H2O + 2 H(+). The protein operates within plant hormone biosynthesis; brassinosteroid biosynthesis. Functionally, catalyzes the C6-oxidation step in brassinosteroids biosynthesis. Converts 6-deoxocastasterone (6-deoxoCS) to castasterone (CS). May also convert 6-deoxoteasterone (6-deoxoTE) to teasterone (TE), 3-dehydro-6-deoxoteasterone (6-deoxo3DT, 6-deoxo-3-DHT) to 3-dehydroteasterone (3DT, 3-DHT), and 6-deoxotyphasterol (6-deoxoTY) to typhasterol (TY). Required for the initiation of female gametogenesis (megagametogenesis). This is Cytochrome P450 85A1 from Arabidopsis thaliana (Mouse-ear cress).